Here is a 147-residue protein sequence, read N- to C-terminus: Hemoglobin subunit delta (147 aa).

Positions 3–147 constitute a Globin domain; sequence HLTPEEKTAV…VANALAHKYH (145 aa). Phosphoserine is present on S51. Positions 64 and 93 each coordinate heme b.

It belongs to the globin family. As to quaternary structure, heterotetramer of two delta chains and two alpha chains. Red blood cells.

The sequence is that of Hemoglobin subunit delta (HBD) from Gorilla gorilla gorilla (Western lowland gorilla).